Reading from the N-terminus, the 444-residue chain is 1,4-beta-D-glucan glucohydrolase (444 aa).

The active-site Proton donor is the Glu164. Catalysis depends on Glu349, which acts as the Nucleophile.

The protein belongs to the glycosyl hydrolase 1 family. As to quaternary structure, monomer.

It catalyses the reaction Hydrolysis of (1-&gt;4)-linkages in (1-&gt;4)-beta-D-glucans, to remove successive glucose units.. The enzyme catalyses Hydrolysis of terminal, non-reducing beta-D-glucosyl residues with release of beta-D-glucose.. Its pathway is glycan metabolism; cellulose degradation. It participates in glycan metabolism; beta-D-glucan degradation. With respect to regulation, activated by glucose up to 200 mM when p-nitrophenyl-beta-glucoside is used as the substrate. This activation by end product concentrations may be due to a transglycosylation activity of the enzyme. Its function is as follows. Broad substrate specificity glycosidase. Releases glucose from soluble glucooligomers, with a preference for longer oligomers; acts more readily on cellotetraose than on cellobiose. Displays similar activities towards the disaccharides lactose and cellobiose. Is also able to hydrolyze various aryl-beta-glycosides in vitro. In Thermotoga neapolitana (strain ATCC 49049 / DSM 4359 / NBRC 107923 / NS-E), this protein is 1,4-beta-D-glucan glucohydrolase.